The primary structure comprises 872 residues: TATA box-binding protein-associated factor RNA polymerase I subunit B (872 aa).

An RRN7-type zinc finger spans residues 6–40 (ETMQLENMHCDVCEGTTFQEREGFYYCVECGTQKD). Cys15, Cys18, Cys32, and Cys35 together coordinate Zn(2+). The B-reader stretch occupies residues 41-72 (QIRAVDITAEDNFDDTAAGRYTARTIRQKKDT). The segment at 73-84 (EKEDEDDITSWE) is B-linker. The segment at 85 to 312 (FYNYVLRGFL…LPGNVAAKGK (228 aa)) is N-terminal cyclin fold. The tract at residues 187–206 (DASGYRSHGGASESEGEQSL) is disordered.

The protein belongs to the RRN7/TAF1B family.

The protein resides in the nucleus. Its subcellular location is the nucleolus. In terms of biological role, component of RNA polymerase I core factor complex that acts as a GTF2B/TFIIB-like factor and plays a key role in multiple steps during transcription initiation such as pre-initiation complex (PIC) assembly and postpolymerase recruitment events in polymerase I (Pol I) transcription. Binds rDNA promoters and plays a role in Pol I recruitment. The polypeptide is TATA box-binding protein-associated factor RNA polymerase I subunit B (Drosophila melanogaster (Fruit fly)).